The primary structure comprises 222 residues: RNA-binding protein KhpB (222 aa).

The tract at residues 2–51 (DMVTVTAKTVEEAVTKALIELQTTSDKLTYEIVEKGSAGFLGIGSKPAII) is jag_N domain. The KH domain maps to 54–133 (KRKETLQDKA…KSSSDYIRVK (80 aa)). In terms of domain architecture, R3H spans 138 to 204 (NYRERRKETL…EEPFRHVIIS (67 aa)).

The protein belongs to the KhpB RNA-binding protein family. Forms a complex with KhpA. Homodimer or homotrimer.

The protein localises to the cytoplasm. In terms of biological role, a probable RNA chaperone. Forms a complex with KhpA which binds to cellular RNA and controls its expression. Plays a role in peptidoglycan (PG) homeostasis and cell length regulation. The polypeptide is RNA-binding protein KhpB (Clostridium symbiosum (Bacteroides symbiosus)).